The chain runs to 344 residues: 2,3,4,5-tetrahydropyridine-2,6-dicarboxylate N-succinyltransferase (344 aa).

Glu-205 serves as a coordination point for Mg(2+). The Acyl-anhydride intermediate role is filled by Glu-221. Residues Arg-223, Gly-238, Ser-241, Ala-264, 279-280, Gly-287, Lys-304, and 317-320 contribute to the succinyl-CoA site; these read EA and RRNS.

Belongs to the type 2 tetrahydrodipicolinate N-succinyltransferase family. In terms of assembly, homotrimer.

The protein resides in the cytoplasm. It catalyses the reaction (S)-2,3,4,5-tetrahydrodipicolinate + succinyl-CoA + H2O = (S)-2-succinylamino-6-oxoheptanedioate + CoA. Its pathway is amino-acid biosynthesis; L-lysine biosynthesis via DAP pathway; LL-2,6-diaminopimelate from (S)-tetrahydrodipicolinate (succinylase route): step 1/3. Functionally, catalyzes the conversion of the cyclic tetrahydrodipicolinate (THDP) into the acyclic N-succinyl-L-2-amino-6-oxopimelate using succinyl-CoA. The sequence is that of 2,3,4,5-tetrahydropyridine-2,6-dicarboxylate N-succinyltransferase from Pseudomonas paraeruginosa (strain DSM 24068 / PA7) (Pseudomonas aeruginosa (strain PA7)).